Reading from the N-terminus, the 189-residue chain is Elongation factor P (189 aa).

It belongs to the elongation factor P family.

The protein resides in the cytoplasm. The protein operates within protein biosynthesis; polypeptide chain elongation. In terms of biological role, involved in peptide bond synthesis. Stimulates efficient translation and peptide-bond synthesis on native or reconstituted 70S ribosomes in vitro. Probably functions indirectly by altering the affinity of the ribosome for aminoacyl-tRNA, thus increasing their reactivity as acceptors for peptidyl transferase. The chain is Elongation factor P from Rhizobium etli (strain CIAT 652).